A 273-amino-acid polypeptide reads, in one-letter code: Proteasome subunit beta type-5-B (273 aa).

A propeptide spans 1–57 (removed in mature form); the sequence is MKLDTSGLETTMPVIGFGSNSEMLDGFSSAPSFDLPRTTDFDGFQKKAVEMVKPAKG. The Nucleophile role is filled by Thr-58.

Belongs to the peptidase T1B family. Component of the 20S core complex of the 26S proteasome. The 26S proteasome is composed of a core protease (CP), known as the 20S proteasome, capped at one or both ends by the 19S regulatory particle (RP/PA700). The 20S proteasome core is composed of 28 subunits that are arranged in four stacked rings, resulting in a barrel-shaped structure. The two end rings are each formed by seven alpha subunits, and the two central rings are each formed by seven beta subunits. The catalytic chamber with the active sites is on the inside of the barrel.

It is found in the cytoplasm. The protein resides in the nucleus. The enzyme catalyses Cleavage of peptide bonds with very broad specificity.. The proteasome is a multicatalytic proteinase complex which is characterized by its ability to cleave peptides with Arg, Phe, Tyr, Leu, and Glu adjacent to the leaving group at neutral or slightly basic pH. The proteasome has an ATP-dependent proteolytic activity. This chain is Proteasome subunit beta type-5-B (PBE2), found in Arabidopsis thaliana (Mouse-ear cress).